We begin with the raw amino-acid sequence, 276 residues long: MNPEHSPLGKATVYAAQYDASLLFPIPRAGAREQLGITSALPFFGTDIWNAYELSWLNTRGKPQVAIATFYVPAESPNIVESKSFKLYLGSFAQSKFDSVDAVRDVLKRDVSAACGASVSVQLVSAHDFAKLEMDELDGLSLDRLDLDTDVYEPDPSLLSAADGENEAPVEETLVSDLLRSNCPVTGQPDWGSVQIHYVGPQIDHAGLLRYIISFRNHTGFHEQCVERIFLDIMHACKPVKLAVYARYTRRGGLDINPFRTNYNQPMPDNARTARQ.

80–82 (VES) is a binding site for substrate. 82 to 83 (SK) contributes to the NADPH binding site. The active-site Thioimide intermediate is Cys-183. Asp-190 functions as the Proton donor in the catalytic mechanism. Residue 222 to 223 (HE) coordinates substrate. 251-252 (RG) provides a ligand contact to NADPH.

This sequence belongs to the GTP cyclohydrolase I family. QueF type 2 subfamily. As to quaternary structure, homodimer.

It is found in the cytoplasm. The catalysed reaction is 7-aminomethyl-7-carbaguanine + 2 NADP(+) = 7-cyano-7-deazaguanine + 2 NADPH + 3 H(+). It participates in tRNA modification; tRNA-queuosine biosynthesis. Catalyzes the NADPH-dependent reduction of 7-cyano-7-deazaguanine (preQ0) to 7-aminomethyl-7-deazaguanine (preQ1). In Burkholderia orbicola (strain MC0-3), this protein is NADPH-dependent 7-cyano-7-deazaguanine reductase.